The following is a 493-amino-acid chain: Geraniol 8-hydroxylase (493 aa).

Residues 1–6 lie on the Lumenal side of the membrane; sequence MDYLTI. The helical transmembrane segment at 7–23 threads the bilayer; that stretch reads ILTLLFALTLYEAFSYL. At 24-493 the chain is on the cytoplasmic side; it reads SRRTKNLPPG…HPLRAVPSTL (470 aa). Cys-436 is a heme binding site.

The protein belongs to the cytochrome P450 family. Heme is required as a cofactor. Expressed in roots, stems, leaves and flower buds. Hardly detected in mature flowers and fruits. Expressed in the internal phloem-associated parenchyma.

It localises to the endoplasmic reticulum membrane. The catalysed reaction is (2E)-geraniol + reduced [NADPH--hemoprotein reductase] + O2 = (6E)-8-hydroxygeraniol + oxidized [NADPH--hemoprotein reductase] + H2O + H(+). Hydroxylase involved in the biosynthesis of hydroxygeraniol, a precursor of the terpenoid indole alkaloids such as vinblastine and vincristine. Also able to hydroxylate in vitro nerol and to catalyze 3'-hydroxylation of the flavanone naringenin to form eriodictyol. No activity with apigenin, kaempferol, p-coumaric acid and ferulic acid as substrates. This is Geraniol 8-hydroxylase (CYP76B6) from Catharanthus roseus (Madagascar periwinkle).